The chain runs to 194 residues: MRESSQIRETTETKIKLSLQLDEGKNVSVQTGVGFFDHMLTLFARHGRFGLQVEAEGDVFVDAHHTVEDVGIVLGNCLKEALQNKEGINRYGSAYVPMDESLGFVAIDISGRSYIVFQGELTNPKLGDFDTELTEEFFRAVAHAANITLHARILYGSNTHHKIEALFKAFGRALREAVERNAHITGVNSTKGML.

Belongs to the imidazoleglycerol-phosphate dehydratase family.

Its subcellular location is the cytoplasm. The catalysed reaction is D-erythro-1-(imidazol-4-yl)glycerol 3-phosphate = 3-(imidazol-4-yl)-2-oxopropyl phosphate + H2O. It functions in the pathway amino-acid biosynthesis; L-histidine biosynthesis; L-histidine from 5-phospho-alpha-D-ribose 1-diphosphate: step 6/9. The protein is Imidazoleglycerol-phosphate dehydratase of Bacillus anthracis (strain A0248).